The following is a 240-amino-acid chain: LexA repressor (240 aa).

Residues 26-46 (FDEMKDALDLASKSGIHRLIT) constitute a DNA-binding region (H-T-H motif). Active-site for autocatalytic cleavage activity residues include serine 160 and lysine 198.

Belongs to the peptidase S24 family. As to quaternary structure, homodimer.

The enzyme catalyses Hydrolysis of Ala-|-Gly bond in repressor LexA.. Functionally, represses a number of genes involved in the response to DNA damage (SOS response), including recA and lexA. In the presence of single-stranded DNA, RecA interacts with LexA causing an autocatalytic cleavage which disrupts the DNA-binding part of LexA, leading to derepression of the SOS regulon and eventually DNA repair. The protein is LexA repressor of Agrobacterium fabrum (strain C58 / ATCC 33970) (Agrobacterium tumefaciens (strain C58)).